A 1416-amino-acid polypeptide reads, in one-letter code: DNA-directed RNA polymerase subunit beta' (1416 aa).

Zn(2+) contacts are provided by C71, C73, C86, and C89. D461, D463, and D465 together coordinate Mg(2+). 4 residues coordinate Zn(2+): C815, C892, C899, and C902.

This sequence belongs to the RNA polymerase beta' chain family. As to quaternary structure, the RNAP catalytic core consists of 2 alpha, 1 beta, 1 beta' and 1 omega subunit. When a sigma factor is associated with the core the holoenzyme is formed, which can initiate transcription. The cofactor is Mg(2+). Zn(2+) is required as a cofactor.

It carries out the reaction RNA(n) + a ribonucleoside 5'-triphosphate = RNA(n+1) + diphosphate. In terms of biological role, DNA-dependent RNA polymerase catalyzes the transcription of DNA into RNA using the four ribonucleoside triphosphates as substrates. The protein is DNA-directed RNA polymerase subunit beta' of Blochmanniella pennsylvanica (strain BPEN).